Here is a 421-residue protein sequence, read N- to C-terminus: UPF0229 protein lpp2857 (421 aa).

Residues 83–110 (IAGDRIKRPSGGGAGGAGGNASDSGEGE) are disordered. Over residues 92–101 (SGGGAGGAGG) the composition is skewed to gly residues.

Belongs to the UPF0229 family.

The chain is UPF0229 protein lpp2857 from Legionella pneumophila (strain Paris).